The following is a 79-amino-acid chain: Small ribosomal subunit protein uS17 (79 aa).

Belongs to the universal ribosomal protein uS17 family. As to quaternary structure, part of the 30S ribosomal subunit.

Its function is as follows. One of the primary rRNA binding proteins, it binds specifically to the 5'-end of 16S ribosomal RNA. This is Small ribosomal subunit protein uS17 from Rhodospirillum rubrum (strain ATCC 11170 / ATH 1.1.1 / DSM 467 / LMG 4362 / NCIMB 8255 / S1).